The sequence spans 481 residues: Glutamyl-tRNA(Gln) amidotransferase subunit A (481 aa).

Active-site charge relay system residues include Lys-76 and Ser-151. Ser-175 acts as the Acyl-ester intermediate in catalysis.

The protein belongs to the amidase family. GatA subfamily. In terms of assembly, heterotrimer of A, B and C subunits.

It catalyses the reaction L-glutamyl-tRNA(Gln) + L-glutamine + ATP + H2O = L-glutaminyl-tRNA(Gln) + L-glutamate + ADP + phosphate + H(+). Functionally, allows the formation of correctly charged Gln-tRNA(Gln) through the transamidation of misacylated Glu-tRNA(Gln) in organisms which lack glutaminyl-tRNA synthetase. The reaction takes place in the presence of glutamine and ATP through an activated gamma-phospho-Glu-tRNA(Gln). The chain is Glutamyl-tRNA(Gln) amidotransferase subunit A from Neisseria meningitidis serogroup C / serotype 2a (strain ATCC 700532 / DSM 15464 / FAM18).